The following is a 155-amino-acid chain: Cytochrome c-type biogenesis protein CcmE (155 aa).

The Cytoplasmic portion of the chain corresponds to 1–8; the sequence is MNPVRKKR. A helical; Signal-anchor for type II membrane protein membrane pass occupies residues 9 to 29; sequence LFIVLAILAGVGIAVALALSA. The Periplasmic portion of the chain corresponds to 30–155; sequence LQQNINLFYT…YEGGKQEYAK (126 aa). Residues His-124 and Tyr-128 each coordinate heme.

It belongs to the CcmE/CycJ family.

The protein resides in the cell inner membrane. Functionally, heme chaperone required for the biogenesis of c-type cytochromes. Transiently binds heme delivered by CcmC and transfers the heme to apo-cytochromes in a process facilitated by CcmF and CcmH. The polypeptide is Cytochrome c-type biogenesis protein CcmE (Stutzerimonas stutzeri (strain A1501) (Pseudomonas stutzeri)).